The primary structure comprises 233 residues: UPF0173 metal-dependent hydrolase Igni_1254 (233 aa).

Belongs to the UPF0173 family.

This is UPF0173 metal-dependent hydrolase Igni_1254 from Ignicoccus hospitalis (strain KIN4/I / DSM 18386 / JCM 14125).